The sequence spans 368 residues: Aminomethyltransferase (368 aa).

The protein belongs to the GcvT family. As to quaternary structure, the glycine cleavage system is composed of four proteins: P, T, L and H.

The enzyme catalyses N(6)-[(R)-S(8)-aminomethyldihydrolipoyl]-L-lysyl-[protein] + (6S)-5,6,7,8-tetrahydrofolate = N(6)-[(R)-dihydrolipoyl]-L-lysyl-[protein] + (6R)-5,10-methylene-5,6,7,8-tetrahydrofolate + NH4(+). In terms of biological role, the glycine cleavage system catalyzes the degradation of glycine. The chain is Aminomethyltransferase from Thermoanaerobacter sp. (strain X514).